We begin with the raw amino-acid sequence, 189 residues long: Elongation factor P (189 aa).

This sequence belongs to the elongation factor P family.

The protein resides in the cytoplasm. It functions in the pathway protein biosynthesis; polypeptide chain elongation. Involved in peptide bond synthesis. Stimulates efficient translation and peptide-bond synthesis on native or reconstituted 70S ribosomes in vitro. Probably functions indirectly by altering the affinity of the ribosome for aminoacyl-tRNA, thus increasing their reactivity as acceptors for peptidyl transferase. The sequence is that of Elongation factor P from Pseudomonas putida (strain ATCC 700007 / DSM 6899 / JCM 31910 / BCRC 17059 / LMG 24140 / F1).